A 2042-amino-acid chain; its full sequence is Cell adhesion molecule DSCAML1 (2042 aa).

A signal peptide spans 1–17; it reads MWLVTFFLLYSLRKAHT. Over 18–1592 the chain is Extracellular; sequence EDVGTSLYFV…AQGEGDDVKK (1575 aa). 2 N-linked (GlcNAc...) asparagine glycosylation sites follow: Asn28 and Asn78. Ig-like C2-type domains follow at residues 37–107, 114–216, 227–311, 315–403, 409–502, 507–587, 597–686, 691–785, and 789–886; these read SSTV…AENS, PNIR…ARLS, PTML…GTLT, PLRV…SIIT, PRIV…ARIN, PSIR…LSIS, PPLI…RQLI, PRFV…MFLT, and PAMI…LTVQ. Cystine bridges form between Cys46–Cys102, Cys145–Cys197, Cys248–Cys295, Cys337–Cys387, and Cys430–Cys486. Asn369, Asn472, Asn514, Asn557, Asn667, Asn711, Asn750, Asn797, and Asn810 each carry an N-linked (GlcNAc...) asparagine glycan. 2 cysteine pairs are disulfide-bonded: Cys527/Cys576 and Cys618/Cys670. Cys712 and Cys768 are joined by a disulfide. A disulfide bridge connects residues Cys811 and Cys868. Fibronectin type-III domains follow at residues 888 to 985, 990 to 1089, 1094 to 1190, and 1194 to 1289; these read PPDP…TEEA, PPMD…TLED, PPEN…TKED, and PPAG…AGKA. 6 N-linked (GlcNAc...) asparagine glycosylation sites follow: Asn927, Asn1083, Asn1145, Asn1163, Asn1276, and Asn1346. The Ig-like C2-type 10 domain maps to 1279 to 1368; sequence EKVTIEPAGK…SGYYTCTATN (90 aa). Cys1312 and Cys1364 are disulfide-bonded. 2 consecutive Fibronectin type-III domains span residues 1384–1478 and 1479–1579; these read PPDQ…THGR and EPSF…TIPP. N-linked (GlcNAc...) asparagine glycans are attached at residues Asn1493, Asn1532, and Asn1562. The helical transmembrane segment at 1593–1613 threads the bilayer; sequence LFTIACPIILATLGVALLFII. Over 1614–2042 the chain is Cytoplasmic; it reads RKKRKEKRLK…GAYSKSYTLV (429 aa). 4 disordered regions span residues 1716–1742, 1781–1805, 1841–1865, and 1940–2042; these read PLID…HSTR, SDSY…TESA, SSDQ…PSEP, and PPAR…YTLV. Basic residues predominate over residues 1733–1742; the sequence is KSVKSAHSTR. Composition is skewed to polar residues over residues 1781–1790 and 1841–1863; these read SDSYSASLSQ and SSDQ…STPS. Over residues 1951–1960 the composition is skewed to pro residues; sequence AKPPGLPPPS. A compositionally biased stretch (low complexity) spans 1961–1983; the sequence is SSSSSTTLPQRTLPMPTAASTAP. Residues 1984–1995 are compositionally biased toward pro residues; it reads APAPAPAAPAEP. Low complexity-rich tracts occupy residues 1996-2005 and 2023-2034; these read PANTTTTTTT and GAGRAQKQGAGA.

As to quaternary structure, homodimer; mediates homophilic interactions to promote cell adhesion. In terms of tissue distribution, SDK1, SDK2, DSCAM and DSCAML1 are expressed in non-overlapping subsets of interneurons and retinal ganglion cells (RGCs) that form synapses in distinct inner plexiform layer (IPL) sublaminae.

The protein resides in the cell membrane. The protein localises to the synapse. Cell adhesion molecule that plays a role in neuronal self-avoidance. Promotes repulsion between specific neuronal processes of either the same cell or the same subtype of cells. Adhesion molecule that promotes lamina-specific synaptic connections in the retina: expressed in specific subsets of interneurons and retinal ganglion cells (RGCs) and promotes synaptic connectivity via homophilic interactions. The protein is Cell adhesion molecule DSCAML1 (DSCAML1) of Gallus gallus (Chicken).